The primary structure comprises 472 residues: Diaminopimelate decarboxylase (472 aa).

The interval 1 to 23 (MNVHTAGPRHAEKTRHTATPQRV) is disordered. Lysine 97 carries the N6-(pyridoxal phosphate)lysine modification. Residues glycine 283 and 325-328 (EPGR) contribute to the pyridoxal 5'-phosphate site. Residues arginine 328, arginine 369, and tyrosine 373 each contribute to the substrate site. Cysteine 400 (proton donor) is an active-site residue. Positions 401 and 430 each coordinate substrate. Tyrosine 430 is a binding site for pyridoxal 5'-phosphate.

It belongs to the Orn/Lys/Arg decarboxylase class-II family. LysA subfamily. In terms of assembly, homodimer. Requires pyridoxal 5'-phosphate as cofactor.

It catalyses the reaction meso-2,6-diaminopimelate + H(+) = L-lysine + CO2. The protein operates within amino-acid biosynthesis; L-lysine biosynthesis via DAP pathway; L-lysine from DL-2,6-diaminopimelate: step 1/1. Its function is as follows. Specifically catalyzes the decarboxylation of meso-diaminopimelate (meso-DAP) to L-lysine. This chain is Diaminopimelate decarboxylase, found in Mycobacterium leprae (strain TN).